The following is a 318-amino-acid chain: Dual specificity protein phosphatase 2 (318 aa).

Residues 27 to 148 (EAERTLLLDC…FQTYCPDLCS (122 aa)) form the Rhodanese domain. The Tyrosine-protein phosphatase domain maps to 176-317 (GPVEILPYLY…LLQLETQVLC (142 aa)). Catalysis depends on cysteine 261, which acts as the Phosphocysteine intermediate.

It belongs to the protein-tyrosine phosphatase family. Non-receptor class dual specificity subfamily. Interacts with MAPK14; this interaction does not lead to catalytic activation of DUSP2 and dephosphrylation of MAPK14. As to expression, in hematopoietic tissues such as spleen and thymus.

It localises to the nucleus. The catalysed reaction is O-phospho-L-tyrosyl-[protein] + H2O = L-tyrosyl-[protein] + phosphate. It carries out the reaction O-phospho-L-threonyl-[protein] + H2O = L-threonyl-[protein] + phosphate. Its function is as follows. Dephosphorylates both phosphorylated Thr and Tyr residues in MAPK1, and dephosphorylation of phosphotyrosine is slightly faster than that of phosphothreonine. Can dephosphorylate MAPK1. The polypeptide is Dual specificity protein phosphatase 2 (Mus musculus (Mouse)).